Reading from the N-terminus, the 788-residue chain is Mediator of RNA polymerase II transcription subunit 15 (788 aa).

Residues 9–73 are interaction with SREBF1; it reads DWRSTAFRQK…IHFRDIHNKK (65 aa). Disordered regions lie at residues 95-139 and 260-329; these read GAAG…MAPH and QQQA…PLVS. Over residues 108–117 the composition is skewed to gly residues; it reads QSLGGMGSLG. The segment covering 260–269 has biased composition (low complexity); it reads QQQALQAQPP. The segment covering 270–284 has biased composition (pro residues); that stretch reads IQQPPMQQPQPPPSQ. 2 stretches are compositionally biased toward low complexity: residues 285–294 and 309–329; these read ALPQQLQQMH and PVAQNQPSQLPPQSQTQPLVS. At Arg-349 the chain carries Asymmetric dimethylarginine. The interval 412–530 is disordered; the sequence is SSSIPLGRQP…PAGSSQAEEQ (119 aa). The span at 426 to 446 shows a compositional bias: low complexity; sequence SQSSLPMLSSPSPGQQVQTPQ. The segment covering 447–459 has biased composition (pro residues); the sequence is SMPPPPQPSPQPG. Residues 460–482 are compositionally biased toward low complexity; the sequence is QPSSQPNSNVSSGPAPSPSSFLP. Polar residues-rich tracts occupy residues 493 to 503 and 511 to 529; these read VTARTPQNFSV and TPVNPSSVMSPAGSSQAEE. A Nuclear localization signal motif is present at residues 547 to 564; that stretch reads RRMINKIDKNEDRKKDLS. Thr-603 bears the Phosphothreonine mark.

It belongs to the Mediator complex subunit 15 family. In terms of assembly, component of the Mediator complex, which is composed of MED1, MED4, MED6, MED7, MED8, MED9, MED10, MED11, MED12, MED13, MED13L, MED14, MED15, MED16, MED17, MED18, MED19, MED20, MED21, MED22, MED23, MED24, MED25, MED26, MED27, MED29, MED30, MED31, CCNC, CDK8 and CDC2L6/CDK11. The MED12, MED13, CCNC and CDK8 subunits form a distinct module termed the CDK8 module. Mediator containing the CDK8 module is less active than Mediator lacking this module in supporting transcriptional activation. Individual preparations of the Mediator complex lacking one or more distinct subunits have been variously termed ARC, CRSP, DRIP, PC2, SMCC and TRAP. Interacts with SMAD2, SMAD3, SREBF1 and SREBF2. Interacts with WWTR1. Interacts with TRIM11. Post-translationally, ubiquitinated by TRIM11, leading to proteasomal degradation. In terms of tissue distribution, expressed in all tissues examined, including heart, brain, lung, spleen, thymus, pancreas, blood leukocyte and placenta. However, the level of expression varied, with highest expression in the placenta and peripheral blood and lowest in the pancreas and kidney.

The protein localises to the cytoplasm. Its subcellular location is the nucleus. Its function is as follows. Component of the Mediator complex, a coactivator involved in the regulated transcription of nearly all RNA polymerase II-dependent genes. Mediator functions as a bridge to convey information from gene-specific regulatory proteins to the basal RNA polymerase II transcription machinery. Mediator is recruited to promoters by direct interactions with regulatory proteins and serves as a scaffold for the assembly of a functional preinitiation complex with RNA polymerase II and the general transcription factors. Required for cholesterol-dependent gene regulation. Positively regulates the Nodal signaling pathway. This is Mediator of RNA polymerase II transcription subunit 15 (MED15) from Homo sapiens (Human).